The sequence spans 371 residues: 4-hydroxyprotoasukamycin monooxygenase (371 aa).

It belongs to the bacterial luciferase oxidoreductase family. The cofactor is FMN.

The enzyme catalyses 4-hydroxyprotoasukamycin + NADH + O2 + H(+) = asukamycin + NAD(+) + H2O. Its pathway is antibiotic biosynthesis. Its function is as follows. Involved in the biosynthesis of the antibiotic asukamycin. Catalyzes the epoxidation of 4-hydroxyprotoasukamycin to the final product, asukamycin. Can also convert some 4-hydroxyprotoasukamycin derivatives to their asukamycin derivatives, but cannot use protoasukamycin as substrate. Can also use NADPH, but catalytic efficiency is 20-fold higher with NADH. The protein is 4-hydroxyprotoasukamycin monooxygenase of Streptomyces nodosus subsp. asukaensis.